The primary structure comprises 98 residues: Integration host factor subunit alpha (98 aa).

This sequence belongs to the bacterial histone-like protein family. In terms of assembly, heterodimer of an alpha and a beta chain.

Its function is as follows. This protein is one of the two subunits of integration host factor, a specific DNA-binding protein that functions in genetic recombination as well as in transcriptional and translational control. In Actinobacillus pleuropneumoniae serotype 5b (strain L20), this protein is Integration host factor subunit alpha.